Consider the following 101-residue polypeptide: NAD(P)H-quinone oxidoreductase subunit 4L, chloroplastic (101 aa).

3 consecutive transmembrane segments (helical) span residues Met2 to Ile22, Met32 to Phe52, and Ile61 to Val81.

Belongs to the complex I subunit 4L family. In terms of assembly, NDH is composed of at least 16 different subunits, 5 of which are encoded in the nucleus.

It is found in the plastid. Its subcellular location is the chloroplast thylakoid membrane. It catalyses the reaction a plastoquinone + NADH + (n+1) H(+)(in) = a plastoquinol + NAD(+) + n H(+)(out). It carries out the reaction a plastoquinone + NADPH + (n+1) H(+)(in) = a plastoquinol + NADP(+) + n H(+)(out). NDH shuttles electrons from NAD(P)H:plastoquinone, via FMN and iron-sulfur (Fe-S) centers, to quinones in the photosynthetic chain and possibly in a chloroplast respiratory chain. The immediate electron acceptor for the enzyme in this species is believed to be plastoquinone. Couples the redox reaction to proton translocation, and thus conserves the redox energy in a proton gradient. The chain is NAD(P)H-quinone oxidoreductase subunit 4L, chloroplastic from Fagopyrum esculentum subsp. ancestrale (Wild buckwheat).